A 267-amino-acid chain; its full sequence is Ribosomal RNA small subunit methyltransferase A (267 aa).

S-adenosyl-L-methionine is bound by residues asparagine 18, leucine 20, glycine 45, glutamate 66, aspartate 91, and asparagine 112.

This sequence belongs to the class I-like SAM-binding methyltransferase superfamily. rRNA adenine N(6)-methyltransferase family. RsmA subfamily.

The protein localises to the cytoplasm. The catalysed reaction is adenosine(1518)/adenosine(1519) in 16S rRNA + 4 S-adenosyl-L-methionine = N(6)-dimethyladenosine(1518)/N(6)-dimethyladenosine(1519) in 16S rRNA + 4 S-adenosyl-L-homocysteine + 4 H(+). In terms of biological role, specifically dimethylates two adjacent adenosines (A1518 and A1519) in the loop of a conserved hairpin near the 3'-end of 16S rRNA in the 30S particle. May play a critical role in biogenesis of 30S subunits. The protein is Ribosomal RNA small subunit methyltransferase A of Shewanella amazonensis (strain ATCC BAA-1098 / SB2B).